The primary structure comprises 411 residues: Arginine deiminase (411 aa).

Residue cysteine 401 is the Amidino-cysteine intermediate of the active site.

It belongs to the arginine deiminase family. Glycosylated.

Its subcellular location is the cytoplasm. It catalyses the reaction L-arginine + H2O = L-citrulline + NH4(+). It participates in amino-acid degradation; L-arginine degradation via ADI pathway; carbamoyl phosphate from L-arginine: step 1/2. The sequence is that of Arginine deiminase (arcA) from Streptococcus pyogenes serotype M1.